The following is a 152-amino-acid chain: Transcriptional repressor NrdR (152 aa).

The segment at C3–C34 is a zinc-finger region. Residues I48–E138 form the ATP-cone domain.

The protein belongs to the NrdR family. Requires Zn(2+) as cofactor.

Its function is as follows. Negatively regulates transcription of bacterial ribonucleotide reductase nrd genes and operons by binding to NrdR-boxes. This is Transcriptional repressor NrdR from Chlamydia muridarum (strain MoPn / Nigg).